The primary structure comprises 242 residues: Uridylate kinase (242 aa).

17–20 (KLGG) contributes to the ATP binding site. Gly58 contributes to the UMP binding site. ATP contacts are provided by Gly59 and Arg63. UMP is bound by residues Asp78 and 139 to 146 (MGMPYFST). Positions 172 and 175 each coordinate ATP.

This sequence belongs to the UMP kinase family. As to quaternary structure, homohexamer.

Its subcellular location is the cytoplasm. It carries out the reaction UMP + ATP = UDP + ADP. Its pathway is pyrimidine metabolism; CTP biosynthesis via de novo pathway; UDP from UMP (UMPK route): step 1/1. With respect to regulation, inhibited by UTP. Its function is as follows. Catalyzes the reversible phosphorylation of UMP to UDP. The polypeptide is Uridylate kinase (Rhodococcus jostii (strain RHA1)).